Consider the following 431-residue polypeptide: 3-phosphoshikimate 1-carboxyvinyltransferase (431 aa).

3-phosphoshikimate is bound by residues Lys21, Ser22, and Arg26. Residue Lys21 coordinates phosphoenolpyruvate. Phosphoenolpyruvate-binding residues include Gly93 and Arg121. 3-phosphoshikimate-binding residues include Ser166, Gln168, Ser192, Asp317, and Lys344. Gln168 provides a ligand contact to phosphoenolpyruvate. Asp317 functions as the Proton acceptor in the catalytic mechanism. Positions 348 and 390 each coordinate phosphoenolpyruvate.

The protein belongs to the EPSP synthase family. In terms of assembly, monomer.

The protein localises to the cytoplasm. The catalysed reaction is 3-phosphoshikimate + phosphoenolpyruvate = 5-O-(1-carboxyvinyl)-3-phosphoshikimate + phosphate. The protein operates within metabolic intermediate biosynthesis; chorismate biosynthesis; chorismate from D-erythrose 4-phosphate and phosphoenolpyruvate: step 6/7. In terms of biological role, catalyzes the transfer of the enolpyruvyl moiety of phosphoenolpyruvate (PEP) to the 5-hydroxyl of shikimate-3-phosphate (S3P) to produce enolpyruvyl shikimate-3-phosphate and inorganic phosphate. This chain is 3-phosphoshikimate 1-carboxyvinyltransferase, found in Herpetosiphon aurantiacus (strain ATCC 23779 / DSM 785 / 114-95).